An 879-amino-acid chain; its full sequence is Prostaglandin F2 receptor negative regulator (879 aa).

The signal sequence occupies residues 1-21 (MGRPAPRPLLLALLSLAVCRG). Ig-like C2-type domains follow at residues 22-129 (RVVR…ATVQ) and 149-268 (PSSR…KAVE). At 22-832 (RVVRVPAGTL…MDVLNAFKYP (811 aa)) the chain is on the extracellular side. 2 disulfides stabilise this stretch: C43-C119 and C169-C247. N44 is a glycosylation site (N-linked (GlcNAc...) asparagine). A Cell attachment site motif is present at residues 89–91 (RGD). At T271 the chain carries Phosphothreonine. Ig-like C2-type domains follow at residues 276–389 (PTAL…WHKV), 406–527 (PEYQ…RNSS), 544–662 (ASED…AWSP), and 688–813 (PIFN…AEIH). A disulfide bridge links C299 with C373. Residues N300, N383, and N413 are each glycosylated (N-linked (GlcNAc...) asparagine). An Endoplasmic reticulum retention signal motif is present at residues 424 to 427 (PTEL). Cysteines 429 and 515 form a disulfide. 4 N-linked (GlcNAc...) asparagine glycosylation sites follow: N525, N600, N618, and N691. A disulfide bond links C571 and C655. The Cell attachment site motif lies at 703–705 (RGD). C711 and C793 are joined by a disulfide. The chain crosses the membrane as a helical span at residues 833–853 (LLIGVGLSTVIGLLSCLIGYC). The Cytoplasmic portion of the chain corresponds to 854–879 (SSHWCCKKEVRETRRERRRLMSMEMD).

As to quaternary structure, interacts with CD9 and CD81. Part of a complex composed of CD9, CD81 and IGSF8. Also seems to interact with CD63, CD82 and CD151. Reproductive tissues, lung and heart.

It localises to the endoplasmic reticulum membrane. Its subcellular location is the golgi apparatus. It is found in the trans-Golgi network membrane. In terms of biological role, inhibits the binding of prostaglandin F2-alpha (PGF2-alpha) to its specific FP receptor, by decreasing the receptor number rather than the affinity constant. Functional coupling with the prostaglandin F2-alpha receptor seems to occur. In myoblasts, associates with tetraspanins CD9 and CD81 to prevent myotube fusion during muscle regeneration. The sequence is that of Prostaglandin F2 receptor negative regulator (Ptgfrn) from Rattus norvegicus (Rat).